Reading from the N-terminus, the 184-residue chain is Ribosome-recycling factor (184 aa).

It belongs to the RRF family.

It is found in the cytoplasm. Functionally, responsible for the release of ribosomes from messenger RNA at the termination of protein biosynthesis. May increase the efficiency of translation by recycling ribosomes from one round of translation to another. This Aquifex aeolicus (strain VF5) protein is Ribosome-recycling factor.